The primary structure comprises 135 residues: Phosphoribosyl-AMP cyclohydrolase (135 aa).

Aspartate 89 is a Mg(2+) binding site. Position 90 (cysteine 90) interacts with Zn(2+). Mg(2+)-binding residues include aspartate 91 and aspartate 93. Positions 106 and 113 each coordinate Zn(2+).

It belongs to the PRA-CH family. In terms of assembly, homodimer. Requires Mg(2+) as cofactor. Zn(2+) serves as cofactor.

Its subcellular location is the cytoplasm. The enzyme catalyses 1-(5-phospho-beta-D-ribosyl)-5'-AMP + H2O = 1-(5-phospho-beta-D-ribosyl)-5-[(5-phospho-beta-D-ribosylamino)methylideneamino]imidazole-4-carboxamide. It participates in amino-acid biosynthesis; L-histidine biosynthesis; L-histidine from 5-phospho-alpha-D-ribose 1-diphosphate: step 3/9. Functionally, catalyzes the hydrolysis of the adenine ring of phosphoribosyl-AMP. The chain is Phosphoribosyl-AMP cyclohydrolase from Bifidobacterium adolescentis (strain ATCC 15703 / DSM 20083 / NCTC 11814 / E194a).